The sequence spans 827 residues: Tuftelin-interacting protein 11 (827 aa).

Disordered regions lie at residues 31–129 and 179–203; these read FNPH…KGFV and QRKGKGAVGAYGSERTSQSLQDFPV. Basic and acidic residues predominate over residues 41 to 60; sequence TKEEATYGVWAERDSDEERP. Over residues 88–98 the composition is skewed to acidic residues; the sequence is DVSDEDSDEDE. The segment covering 99–112 has biased composition (basic and acidic residues); the sequence is KPVKQEEIPKEFVP. In terms of domain architecture, G-patch spans 145–191; that stretch reads TKGIGQKLLQKMGYVPGRGLGKNAQGIINPIEAKQRKGKGAVGAYGS.

This sequence belongs to the TFP11/STIP family. Identified in the spliceosome C complex.

The protein resides in the nucleus. In terms of biological role, involved in pre-mRNA splicing, specifically in spliceosome disassembly during late-stage splicing events. This Gallus gallus (Chicken) protein is Tuftelin-interacting protein 11 (TFIP11).